Consider the following 202-residue polypeptide: NADH-quinone oxidoreductase subunit C (202 aa).

It belongs to the complex I 30 kDa subunit family. As to quaternary structure, NDH-1 is composed of 14 different subunits. Subunits NuoB, C, D, E, F, and G constitute the peripheral sector of the complex.

It localises to the cell inner membrane. The catalysed reaction is a quinone + NADH + 5 H(+)(in) = a quinol + NAD(+) + 4 H(+)(out). In terms of biological role, NDH-1 shuttles electrons from NADH, via FMN and iron-sulfur (Fe-S) centers, to quinones in the respiratory chain. The immediate electron acceptor for the enzyme in this species is believed to be ubiquinone. Couples the redox reaction to proton translocation (for every two electrons transferred, four hydrogen ions are translocated across the cytoplasmic membrane), and thus conserves the redox energy in a proton gradient. This chain is NADH-quinone oxidoreductase subunit C, found in Hyphomonas neptunium (strain ATCC 15444).